The primary structure comprises 126 residues: Histone H2B 5 (126 aa).

Low complexity predominate over residues 1-12 (MPEPAKSAPAPK). The tract at residues 1–35 (MPEPAKSAPAPKKGSKKAVTKTQKKGDKKRRKSRK) is disordered. Residues Lys6 and Lys13 each carry the N6-acetyllysine modification. Basic residues predominate over residues 13-34 (KGSKKAVTKTQKKGDKKRRKSR). Ser15 bears the Phosphoserine mark. N6-acetyllysine is present on residues Lys16 and Lys21. Ser113 carries O-linked (GlcNAc) serine glycosylation. Lys121 participates in a covalent cross-link: Glycyl lysine isopeptide (Lys-Gly) (interchain with G-Cter in ubiquitin).

This sequence belongs to the histone H2B family. In terms of assembly, the nucleosome is a histone octamer containing two molecules each of H2A, H2B, H3 and H4 assembled in one H3-H4 heterotetramer and two H2A-H2B heterodimers. The octamer wraps approximately 147 bp of DNA. Post-translationally, monoubiquitination of Lys-121 by the BRE1 gives a specific tag for epigenetic transcriptional activation and is also prerequisite for histone H3 'Lys-4' and 'Lys-79' methylation. In terms of processing, phosphorylated on Ser-15 during apoptosis; which facilitates apoptotic chromatin condensation. GlcNAcylation at Ser-113 promotes monoubiquitination of Lys-121. It fluctuates in response to extracellular glucose, and associates with transcribed genes.

The protein resides in the nucleus. The protein localises to the chromosome. Functionally, core component of nucleosome. Nucleosomes wrap and compact DNA into chromatin, limiting DNA accessibility to the cellular machineries which require DNA as a template. Histones thereby play a central role in transcription regulation, DNA repair, DNA replication and chromosomal stability. DNA accessibility is regulated via a complex set of post-translational modifications of histones, also called histone code, and nucleosome remodeling. This chain is Histone H2B 5 (H2B-V), found in Gallus gallus (Chicken).